A 133-amino-acid polypeptide reads, in one-letter code: Global transcriptional regulator Spx (133 aa).

C10 and C13 are oxidised to a cystine.

The protein belongs to the ArsC family. Spx subfamily. Interacts with the C-terminal domain of the alpha subunit of the RNAP.

Its subcellular location is the cytoplasm. In terms of biological role, global transcriptional regulator that plays a key role in stress response and exerts either positive or negative regulation of genes. Acts by interacting with the C-terminal domain of the alpha subunit of the RNA polymerase (RNAP). This interaction can enhance binding of RNAP to the promoter region of target genes and stimulate their transcription, or block interaction of RNAP with activator. The sequence is that of Global transcriptional regulator Spx from Streptococcus pneumoniae serotype 4 (strain ATCC BAA-334 / TIGR4).